The following is a 493-amino-acid chain: Lysine--tRNA ligase (493 aa).

Positions 402 and 409 each coordinate Mg(2+).

Belongs to the class-II aminoacyl-tRNA synthetase family. As to quaternary structure, homodimer. Mg(2+) serves as cofactor.

It localises to the cytoplasm. The catalysed reaction is tRNA(Lys) + L-lysine + ATP = L-lysyl-tRNA(Lys) + AMP + diphosphate. In Ureaplasma urealyticum serovar 10 (strain ATCC 33699 / Western), this protein is Lysine--tRNA ligase.